The chain runs to 329 residues: G-protein coupled bile acid receptor 1 (329 aa).

At 1–19 (MTSNSTREVPSPVPAGALG) the chain is on the extracellular side. N4 carries N-linked (GlcNAc...) asparagine glycosylation. Residues 20-40 (LSLALASLIVAANLLLAVGIA) form a helical membrane-spanning segment. Over 41–52 (GDRRLRSPPAGC) the chain is Cytoplasmic. A helical membrane pass occupies residues 53–73 (FFLSLLLAGLLTGLALPALPV). Topologically, residues 74–85 (LWSQSRRGYWSC) are extracellular. Residues C85 and C155 are joined by a disulfide bond. The helical transmembrane segment at 86–106 (LFLYLAPNFCFLSLLANLLLV) threads the bilayer. Residues 107-125 (HGERYMAVLRPLRPRGSMR) lie on the Cytoplasmic side of the membrane. The helical transmembrane segment at 126-146 (LALLLTWAAPLLFASLPALGW) threads the bilayer. Topologically, residues 147–165 (NHWAPGGNCSSQAVFPAPY) are extracellular. N-linked (GlcNAc...) asparagine glycosylation is present at N154. The helical transmembrane segment at 166-186 (LYLEIYGLLLPAVGAAALLSV) threads the bilayer. The Cytoplasmic portion of the chain corresponds to 187–230 (RVLVTAHRQLQDIRRLERAVCRGAPSALARALTWRQARAQAGAT). The helical transmembrane segment at 231 to 251 (LLFGLCWGPYVATLLLSVLAF) threads the bilayer. The Extracellular portion of the chain corresponds to 252-261 (EQRPPLGPGT). Residues 262 to 282 (LLSLISLGSASAAAVPVAMGL) form a helical membrane-spanning segment. Residues 283–329 (GDQRYTGPWRVAAQKWLRMLRGRPQSSPGPSTAYHTSSQSSVDLDLN) lie on the Cytoplasmic side of the membrane. Positions 304-329 (GRPQSSPGPSTAYHTSSQSSVDLDLN) are disordered. The segment covering 306-329 (PQSSPGPSTAYHTSSQSSVDLDLN) has biased composition (polar residues).

The protein belongs to the G-protein coupled receptor 1 family.

The protein localises to the cell membrane. Functionally, receptor for bile acid. Bile acid-binding induces its internalization, activation of extracellular signal-regulated kinase and intracellular cAMP production. May be involved in the suppression of macrophage functions by bile acids. Involved in bile acid promoted GLP1R secretion. The protein is G-protein coupled bile acid receptor 1 (GPBAR1) of Bos taurus (Bovine).